We begin with the raw amino-acid sequence, 132 residues long: MVRVVSLLAASTFILLIMIISSPYANSQNICPRVNRIVTPCVAYGLGRAPIAPCCRALNDLRFVNTRNLRRAACRCLVGVVNRNPGLRRNPRFQNIPRDCRNTFVRPFWWRPRIQCGRINLTDKLIYLDAEE.

Positions 1–27 are cleaved as a signal peptide; the sequence is MVRVVSLLAASTFILLIMIISSPYANS. 4 disulfide bridges follow: Cys-31-Cys-76, Cys-41-Cys-54, Cys-55-Cys-100, and Cys-74-Cys-116.

This sequence belongs to the plant LTP family. Highly divergent. As to quaternary structure, monomer.

Functionally, antifungal and antibacterial activity against the Gram-positive bacteria B.megaterium and S.lutea. This chain is Antimicrobial protein Ace-AMP1, found in Allium cepa (Onion).